The chain runs to 454 residues: Allantoinase (454 aa).

6 residues coordinate Zn(2+): H60, H62, K147, H183, H239, and D312. At K147 the chain carries N6-carboxylysine.

It belongs to the metallo-dependent hydrolases superfamily. Allantoinase family. Homotetramer. The cofactor is Zn(2+). In terms of processing, carboxylation allows a single lysine to coordinate two zinc ions.

It catalyses the reaction (S)-allantoin + H2O = allantoate + H(+). Its pathway is nitrogen metabolism; (S)-allantoin degradation; allantoate from (S)-allantoin: step 1/1. Functionally, catalyzes the conversion of allantoin (5-ureidohydantoin) to allantoic acid by hydrolytic cleavage of the five-member hydantoin ring. This Rubrobacter xylanophilus (strain DSM 9941 / JCM 11954 / NBRC 16129 / PRD-1) protein is Allantoinase.